A 397-amino-acid chain; its full sequence is Acetate kinase (397 aa).

Asn-8 serves as a coordination point for Mg(2+). Lys-15 is a binding site for ATP. Arg-89 provides a ligand contact to substrate. Asp-146 acts as the Proton donor/acceptor in catalysis. Residues 206–210 (HLGNG), 281–283 (DLR), and 329–333 (GVGEN) contribute to the ATP site. Glu-382 is a Mg(2+) binding site.

The protein belongs to the acetokinase family. Homodimer. Mg(2+) is required as a cofactor. Requires Mn(2+) as cofactor.

The protein resides in the cytoplasm. It carries out the reaction acetate + ATP = acetyl phosphate + ADP. It participates in metabolic intermediate biosynthesis; acetyl-CoA biosynthesis; acetyl-CoA from acetate: step 1/2. In terms of biological role, catalyzes the formation of acetyl phosphate from acetate and ATP. Can also catalyze the reverse reaction. This chain is Acetate kinase, found in Bacillus cereus (strain ATCC 14579 / DSM 31 / CCUG 7414 / JCM 2152 / NBRC 15305 / NCIMB 9373 / NCTC 2599 / NRRL B-3711).